The primary structure comprises 899 residues: Putative lipoxygenase 5 (899 aa).

3 disordered regions span residues 15–34 (AGSR…RSTA), 48–68 (APVE…SVAA), and 258–291 (VASA…SAES). Positions 68-204 (ARAVVTVRRR…VSRDRRVFFS (137 aa)) constitute a PLAT domain. Residues 207 to 899 (PYLPSETPPG…CRGVPNSVTI (693 aa)) enclose the Lipoxygenase domain. The Fe cation site is built by histidine 559, histidine 564, histidine 751, asparagine 755, and isoleucine 899.

The protein belongs to the lipoxygenase family. Fe cation serves as cofactor.

The catalysed reaction is (9Z,12Z)-octadecadienoate + O2 = (13S)-hydroperoxy-(9Z,11E)-octadecadienoate. It carries out the reaction (9Z,12Z,15Z)-octadecatrienoate + O2 = (13S)-hydroperoxy-(9Z,11E,15Z)-octadecatrienoate. It functions in the pathway lipid metabolism; oxylipin biosynthesis. Plant lipoxygenase may be involved in a number of diverse aspects of plant physiology including growth and development, pest resistance, and senescence or responses to wounding. Catalyzes the hydroperoxidation of lipids containing a cis,cis-1,4-pentadiene structure. The polypeptide is Putative lipoxygenase 5 (Oryza sativa subsp. japonica (Rice)).